A 125-amino-acid chain; its full sequence is Large ribosomal subunit protein bL19 (125 aa).

Belongs to the bacterial ribosomal protein bL19 family.

Its function is as follows. This protein is located at the 30S-50S ribosomal subunit interface and may play a role in the structure and function of the aminoacyl-tRNA binding site. This is Large ribosomal subunit protein bL19 from Ehrlichia chaffeensis (strain ATCC CRL-10679 / Arkansas).